The chain runs to 125 residues: Large ribosomal subunit protein bL12 (125 aa).

Belongs to the bacterial ribosomal protein bL12 family. As to quaternary structure, homodimer. Part of the ribosomal stalk of the 50S ribosomal subunit. Forms a multimeric L10(L12)X complex, where L10 forms an elongated spine to which 2 to 4 L12 dimers bind in a sequential fashion. Binds GTP-bound translation factors.

Forms part of the ribosomal stalk which helps the ribosome interact with GTP-bound translation factors. Is thus essential for accurate translation. The polypeptide is Large ribosomal subunit protein bL12 (Coprothermobacter proteolyticus (strain ATCC 35245 / DSM 5265 / OCM 4 / BT)).